Here is a 244-residue protein sequence, read N- to C-terminus: DNA repair protein RecO (244 aa).

Belongs to the RecO family.

Functionally, involved in DNA repair and RecF pathway recombination. The chain is DNA repair protein RecO from Ehrlichia chaffeensis (strain ATCC CRL-10679 / Arkansas).